Here is a 429-residue protein sequence, read N- to C-terminus: Bifunctional protein GlmU (429 aa).

The tract at residues 1–223 (MKISVLILAA…EQDFMGVNDK (223 aa)) is pyrophosphorylase. UDP-N-acetyl-alpha-D-glucosamine contacts are provided by residues 8–11 (LAAG), Lys-22, Gln-74, and 81–82 (GT). Asp-102 lines the Mg(2+) pocket. 4 residues coordinate UDP-N-acetyl-alpha-D-glucosamine: Gly-135, Glu-149, Asn-164, and Asn-221. A Mg(2+)-binding site is contributed by Asn-221. The tract at residues 224–244 (IELCLAQDLMQEAIKKEWMKQ) is linker. Residues 245-429 (GVIFHMPATT…KDYFYTKFKK (185 aa)) are N-acetyltransferase. UDP-N-acetyl-alpha-D-glucosamine is bound by residues Arg-308 and Lys-325. The active-site Proton acceptor is the His-336. Residues Tyr-339 and Asn-350 each coordinate UDP-N-acetyl-alpha-D-glucosamine. Acetyl-CoA-binding positions include 359–360 (NY), Ser-378, Ala-396, and Arg-413.

The protein in the N-terminal section; belongs to the N-acetylglucosamine-1-phosphate uridyltransferase family. In the C-terminal section; belongs to the transferase hexapeptide repeat family. Homotrimer. Requires Mg(2+) as cofactor.

The protein resides in the cytoplasm. It carries out the reaction alpha-D-glucosamine 1-phosphate + acetyl-CoA = N-acetyl-alpha-D-glucosamine 1-phosphate + CoA + H(+). The catalysed reaction is N-acetyl-alpha-D-glucosamine 1-phosphate + UTP + H(+) = UDP-N-acetyl-alpha-D-glucosamine + diphosphate. It functions in the pathway nucleotide-sugar biosynthesis; UDP-N-acetyl-alpha-D-glucosamine biosynthesis; N-acetyl-alpha-D-glucosamine 1-phosphate from alpha-D-glucosamine 6-phosphate (route II): step 2/2. It participates in nucleotide-sugar biosynthesis; UDP-N-acetyl-alpha-D-glucosamine biosynthesis; UDP-N-acetyl-alpha-D-glucosamine from N-acetyl-alpha-D-glucosamine 1-phosphate: step 1/1. The protein operates within bacterial outer membrane biogenesis; LPS lipid A biosynthesis. Its function is as follows. Catalyzes the last two sequential reactions in the de novo biosynthetic pathway for UDP-N-acetylglucosamine (UDP-GlcNAc). The C-terminal domain catalyzes the transfer of acetyl group from acetyl coenzyme A to glucosamine-1-phosphate (GlcN-1-P) to produce N-acetylglucosamine-1-phosphate (GlcNAc-1-P), which is converted into UDP-GlcNAc by the transfer of uridine 5-monophosphate (from uridine 5-triphosphate), a reaction catalyzed by the N-terminal domain. This Campylobacter lari (strain RM2100 / D67 / ATCC BAA-1060) protein is Bifunctional protein GlmU.